The chain runs to 700 residues: Elongation factor G (700 aa).

A tr-type G domain is found at Ser8 to Thr290. GTP is bound by residues Ala17 to Thr24, Asp88 to His92, and Asn142 to Asp145.

This sequence belongs to the TRAFAC class translation factor GTPase superfamily. Classic translation factor GTPase family. EF-G/EF-2 subfamily.

It is found in the cytoplasm. Its function is as follows. Catalyzes the GTP-dependent ribosomal translocation step during translation elongation. During this step, the ribosome changes from the pre-translocational (PRE) to the post-translocational (POST) state as the newly formed A-site-bound peptidyl-tRNA and P-site-bound deacylated tRNA move to the P and E sites, respectively. Catalyzes the coordinated movement of the two tRNA molecules, the mRNA and conformational changes in the ribosome. This is Elongation factor G from Histophilus somni (strain 129Pt) (Haemophilus somnus).